Reading from the N-terminus, the 222-residue chain is Inositol diphosphatase DSP1 (222 aa).

Polar residues predominate over residues 1–14 (MRQEATCSLVLTQD). The segment at 1-41 (MRQEATCSLVLTQDAQHRKNQPPLAEEDDDRDHTDDAMPPP) is disordered. The Tyrosine-protein phosphatase domain occupies 68 to 222 (NFAMVDHGVY…LKHLPASFSC (155 aa)). Residues 124–136 (FGIDGSKEPFVNI) are WPD loop important for active site topology. Asn-135, Ile-136, and Arg-140 together coordinate 1D-myo-inositol hexakisphosphate. Cys-160 (phosphocysteine intermediate) is an active-site residue.

This sequence belongs to the protein-tyrosine phosphatase family. Atypical dual-specificity phosphatase Siw14-like subfamily.

It is found in the nucleus. The protein localises to the cytoplasm. The catalysed reaction is 5-diphospho-1D-myo-inositol 1,2,3,4,6-pentakisphosphate + H2O = 1D-myo-inositol hexakisphosphate + phosphate + H(+). It catalyses the reaction 1,5-bis(diphospho)-1D-myo-inositol 2,3,4,6-tetrakisphosphate + H2O = 1-diphospho-1D-myo-inositol 2,3,4,5,6-pentakisphosphate + phosphate + 2 H(+). It carries out the reaction 3,5-bis(diphospho)-1D-myo-inositol 1,2,4,6-tetrakisphosphate + H2O = 3-diphospho-1D-myo-inositol 1,2,4,5,6-pentakisphosphate + phosphate + 2 H(+). The enzyme catalyses 6-diphospho-1D-myo-inositol pentakisphosphate + H2O = 1D-myo-inositol hexakisphosphate + phosphate + H(+). Cleaves the beta-phosphate at the 5-position of soluble inositol pyrophosphates. Has highest activity on 5-diphosphoinositol 1,2,3,4,6-pentakisphosphate (5-InsP(7)). Possesses phosphotyrosine phosphatase activity in vitro. May contribute to regulation of drought stress responses. In Oryza sativa subsp. japonica (Rice), this protein is Inositol diphosphatase DSP1.